Reading from the N-terminus, the 374-residue chain is Beta sliding clamp (374 aa).

This sequence belongs to the beta sliding clamp family. Forms a ring-shaped head-to-tail homodimer around DNA which binds and tethers DNA polymerases and other proteins to the DNA. The DNA replisome complex has a single clamp-loading complex (3 tau and 1 each of delta, delta', psi and chi subunits) which binds 3 Pol III cores (1 core on the leading strand and 2 on the lagging strand) each with a beta sliding clamp dimer. Additional proteins in the replisome are other copies of gamma, psi and chi, Ssb, DNA helicase and RNA primase.

Its subcellular location is the cytoplasm. Its function is as follows. Confers DNA tethering and processivity to DNA polymerases and other proteins. Acts as a clamp, forming a ring around DNA (a reaction catalyzed by the clamp-loading complex) which diffuses in an ATP-independent manner freely and bidirectionally along dsDNA. Initially characterized for its ability to contact the catalytic subunit of DNA polymerase III (Pol III), a complex, multichain enzyme responsible for most of the replicative synthesis in bacteria; Pol III exhibits 3'-5' exonuclease proofreading activity. The beta chain is required for initiation of replication as well as for processivity of DNA replication. This chain is Beta sliding clamp (dnaN), found in Helicobacter pylori (strain J99 / ATCC 700824) (Campylobacter pylori J99).